The sequence spans 310 residues: Malate dehydrogenase (310 aa).

Residues 7 to 13 (GAAGGIG) and aspartate 34 contribute to the NAD(+) site. Positions 81 and 87 each coordinate substrate. NAD(+) contacts are provided by residues asparagine 94 and 117–119 (ITN). 2 residues coordinate substrate: asparagine 119 and arginine 153. Histidine 177 acts as the Proton acceptor in catalysis. Position 227 (methionine 227) interacts with NAD(+).

Belongs to the LDH/MDH superfamily. MDH type 1 family. As to quaternary structure, homodimer.

The enzyme catalyses (S)-malate + NAD(+) = oxaloacetate + NADH + H(+). Catalyzes the reversible oxidation of malate to oxaloacetate. This is Malate dehydrogenase from Pseudoalteromonas translucida (strain TAC 125).